We begin with the raw amino-acid sequence, 651 residues long: MTYQEYLEKVKLAKEWMRAYYEDDEPLASDEEYDKLIRELKEFEALYKDKISKDSPTQNIAPTIQSEFHKITHSAKMWSMEDVFDEAELRAWAKRAKCEFDFFIEPKFDGASLNLTYENGKLISGATRGDGEIGEDITLNVKEISNIPKIIPYKDKIEIRGEVVILKEDFEKINEKRAKDGLSLFANPRNGASGSLRQLDTSITKERNLKFYPWGVGENSLKFSKHSEVMEFIRSLGFLKDDFVYCVKTLDEVLEKYHELLEKRDQKPMMMDGMVVRVDDLKKCQELGYTVKFPKFMAAFKFPALEKTTTLLGVNLQVGRSGVITPVAILEPVELDGVVVKSATLHNFDEITRLGVMIGDSVSVIRSGDVIPKITKVFTQRRDGLESKITKPSLCPECLSELLDEGAFLKCQNLDCKARLVNSIIYFVSKKCLNIDGLGENIVELLFKEGKITNIESIFFLKYDDFLNLEGFKEKKINNLLNAIENAKKCSLSRFITALGIEHIGEVAAKKLAQSFGFDWFLQSYEAYVNLEGFGEQMAKSLQEFTKINHQRIKHFYEILHLEDEKKELALNENISNKTFVITGTLSKSRDHFKELIESFGAKVSSSVSKKTDFVLYGSEAGSKLEKAQSLGVKCINEDEFNALLGGDDEV.

Residues 30–34 (DEEYD), 79–80 (SM), and glutamate 105 contribute to the NAD(+) site. Catalysis depends on lysine 107, which acts as the N6-AMP-lysine intermediate. Positions 128, 162, and 301 each coordinate NAD(+). Zn(2+) contacts are provided by cysteine 395, cysteine 398, cysteine 411, and cysteine 416. Residues 570-651 (ALNENISNKT…NALLGGDDEV (82 aa)) form the BRCT domain.

This sequence belongs to the NAD-dependent DNA ligase family. LigA subfamily. The cofactor is Mg(2+). Mn(2+) serves as cofactor.

It catalyses the reaction NAD(+) + (deoxyribonucleotide)n-3'-hydroxyl + 5'-phospho-(deoxyribonucleotide)m = (deoxyribonucleotide)n+m + AMP + beta-nicotinamide D-nucleotide.. In terms of biological role, DNA ligase that catalyzes the formation of phosphodiester linkages between 5'-phosphoryl and 3'-hydroxyl groups in double-stranded DNA using NAD as a coenzyme and as the energy source for the reaction. It is essential for DNA replication and repair of damaged DNA. The protein is DNA ligase of Campylobacter lari (strain RM2100 / D67 / ATCC BAA-1060).